Here is a 519-residue protein sequence, read N- to C-terminus: Cytochrome P450 52E2 (519 aa).

Transmembrane regions (helical) follow at residues 10 to 30 and 44 to 64; these read MLGG…FYFI and PIFF…NAWF. Position 461 (cysteine 461) interacts with heme.

It belongs to the cytochrome P450 family. Heme is required as a cofactor.

It is found in the membrane. Together with an NADPH cytochrome P450 the enzyme system catalyzes the terminal hydroxylation as the first step in the assimilation of alkanes and fatty acids. The polypeptide is Cytochrome P450 52E2 (CYP52E2) (Candida apicola (Yeast)).